We begin with the raw amino-acid sequence, 705 residues long: Calpain-1 catalytic subunit (705 aa).

The Calpain catalytic domain occupies 48-347 (LFRDPQFPAG…FSRLEICNLT (300 aa)). Residues cysteine 108, histidine 265, and asparagine 289 contribute to the active site. The interval 348-517 (PDALTKDELS…KQSDTAELDE (170 aa)) is domain III. The linker stretch occupies residues 518-533 (EISADLADEEEITEDD). Positions 530-565 (TEDDIEDGFKNMFQQLAGEDMEISVFELKTILNRVI) constitute an EF-hand 1 domain. The tract at residues 534–704 (IEDGFKNMFQ…LAEWLLLTMC (171 aa)) is domain IV. Residues aspartate 549, glutamate 551, glutamate 556, aspartate 589, aspartate 591, serine 593, arginine 595, glutamate 600, aspartate 619, aspartate 621, serine 623, threonine 625, and glutamate 630 each contribute to the Ca(2+) site. EF-hand domains are found at residues 606-641 (NKIRSWLTIFRQYDLDKSGTMSSYEMRMALESAGFK) and 671-705 (VKLETMFRFFHSMDRDGTGTAVMNLAEWLLLTMCG).

The protein belongs to the peptidase C2 family. As to quaternary structure, heterodimer of large (catalytic) and a small (regulatory) subunit. It depends on Ca(2+) as a cofactor. Post-translationally, the N-terminus is blocked. Ubiquitously expressed.

It localises to the cytoplasm. The protein localises to the cell membrane. The catalysed reaction is Broad endopeptidase specificity.. Activated by micromolar concentrations of calcium and inhibited by calpastatin. Calcium-regulated non-lysosomal thiol-protease which catalyze limited proteolysis of substrates involved in cytoskeletal remodeling and signal transduction. In Gallus gallus (Chicken), this protein is Calpain-1 catalytic subunit.